Consider the following 483-residue polypeptide: MSLGYAEKLSYREDVGNVGMPEIFDSPELLHKKIEELAVMVRESKHLVVFTGAGISTSSGIPDFRGPKGVWTLQRSGKGVPGASLPFHRAVPTLTHMALVELEKTGRLKFVISQNVDSLHLRSGLPREKLAELHGNSFKEICPSCKKEYLRDFEIETIGLKDTPRRCSDKNCGARLKDTVLDWEDALPPEEMDAAKEQCQTADLVLCLGTSLQITPACNMPLLSLKNGGRVAIVNLQATPKDKKASLVIHGLVDKVIAGVMYMMNLRIPPYIRTDFVQISLRNSVKKKCVRWTLRVTSIHGLRAPLPFLRSVEVSFPERPDMKPVVLKEQPFSLQRETSMNRPFVMLLTFNFSDGCGCSSSSIEWPVDFLKQKDSFVRDRSLVLQELQHAAEHRSRAGQHAILEREGVPRAETSIHALVTNIVRYDTEDSKAAVPMATWMNSNGSLSKRHMDAIGCNPASSKKQKLVATRHRRKGLNPATQKV.

Positions 27–270 constitute a Deacetylase sirtuin-type domain; it reads PELLHKKIEE…MYMMNLRIPP (244 aa). NAD(+)-binding positions include 53-57, 63-65, and 114-117; these read AGIST, DFR, and QNVD. Histidine 134 (proton acceptor) is an active-site residue. Residues cysteine 142, cysteine 145, cysteine 167, and cysteine 172 each contribute to the Zn(2+) site. NAD(+) contacts are provided by residues 209-211 and 235-237; these read GTS and NLQ.

The protein belongs to the sirtuin family. Class IV subfamily. The cofactor is Zn(2+).

It localises to the nucleus. It carries out the reaction N(6)-acetyl-L-lysyl-[protein] + NAD(+) + H2O = 2''-O-acetyl-ADP-D-ribose + nicotinamide + L-lysyl-[protein]. NAD-dependent protein deacetylase. Has deacetylase activity towards H3K9Ac. May have a function in the safeguard against genome instability and DNA damage to ensure plant cell growth. May negatively regulate metabolic signal transduction involving methanol and jasmonates during leaf senescence. Required for histone H3K9Ac deacetylation and repression of AP2-1/RSR1 and amylase genes during early seed development. Functions as an epigenetic regulator to repress the expression of glycolytic genes and glycolysis in seedlings. Reduces lysine acetylation of the glycolytic glyceraldehyde-3-phosphate dehydrogenase (GAPDH), which is found to also function as an activator of glycolytic gene expression. This chain is NAD-dependent protein deacetylase SRT1, found in Oryza sativa subsp. indica (Rice).